The chain runs to 306 residues: N-acetylmuramic acid/N-acetylglucosamine kinase (306 aa).

Residue serine 12 coordinates ATP. Asparagine 35 contacts substrate. Threonine 124 serves as a coordination point for ATP. Substrate-binding positions include 142-144 (GWG) and aspartate 149. ATP is bound at residue alanine 208.

Belongs to the eukaryotic-type N-acetylglucosamine kinase family. Mg(2+) is required as a cofactor.

The protein resides in the cytoplasm. It catalyses the reaction N-acetyl-D-glucosamine + ATP = N-acetyl-D-glucosamine 6-phosphate + ADP + H(+). The enzyme catalyses N-acetyl-D-muramate + ATP = N-acetyl-D-muramate 6-phosphate + ADP + H(+). Its pathway is cell wall biogenesis; peptidoglycan recycling. Its function is as follows. Catalyzes the ATP-dependent phosphorylation of both cell wall (peptidoglycan) amino sugars, N-acetylmuramic acid (MurNAc) and N-acetylglucosamine (GlcNAc), at the 6-hydroxyl group. Neither the non-N-acetylated forms of the cell wall sugars, i.e., glucosamine and/or muramic acid, nor epimeric hexoses or 1,6-anhydro-MurNAc are substrates for the enzyme. May have a role in the rescue of the murein sugars GlcNAc and MurNAc released from muropeptides during cell wall turnover in C.acetobutylicum. The polypeptide is N-acetylmuramic acid/N-acetylglucosamine kinase (Clostridium acetobutylicum (strain ATCC 824 / DSM 792 / JCM 1419 / IAM 19013 / LMG 5710 / NBRC 13948 / NRRL B-527 / VKM B-1787 / 2291 / W)).